The following is a 181-amino-acid chain: Inner membrane-spanning protein YciB (181 aa).

5 helical membrane passes run 3 to 23 (LLFD…FGIY), 54 to 74 (SLAI…PWFI), 81 to 101 (IYWL…KPLI), 119 to 139 (LNLA…YVAY), and 149 to 169 (FKLF…AFYL).

It belongs to the YciB family.

The protein resides in the cell inner membrane. In terms of biological role, plays a role in cell envelope biogenesis, maintenance of cell envelope integrity and membrane homeostasis. This chain is Inner membrane-spanning protein YciB, found in Legionella pneumophila (strain Corby).